The chain runs to 320 residues: Methionyl-tRNA formyltransferase (320 aa).

114–117 (SLLP) lines the (6S)-5,6,7,8-tetrahydrofolate pocket.

This sequence belongs to the Fmt family.

The enzyme catalyses L-methionyl-tRNA(fMet) + (6R)-10-formyltetrahydrofolate = N-formyl-L-methionyl-tRNA(fMet) + (6S)-5,6,7,8-tetrahydrofolate + H(+). Functionally, attaches a formyl group to the free amino group of methionyl-tRNA(fMet). The formyl group appears to play a dual role in the initiator identity of N-formylmethionyl-tRNA by promoting its recognition by IF2 and preventing the misappropriation of this tRNA by the elongation apparatus. The protein is Methionyl-tRNA formyltransferase of Acinetobacter baumannii (strain AB307-0294).